Reading from the N-terminus, the 859-residue chain is Nitrate reductase [NADPH] (859 aa).

Cys137 serves as a coordination point for Mo-molybdopterin. A Cytochrome b5 heme-binding domain is found at Asp502 to Glu578. Heme contacts are provided by His538 and His561. In terms of domain architecture, FAD-binding FR-type spans Arg602–Val713. Residues Arg655–Thr658, Leu672–Tyr676, Phe677, Ile687–Thr689, Ser737, and Thr740 contribute to the FAD site. Met829–Met838 provides a ligand contact to NADP(+).

The protein belongs to the nitrate reductase family. In terms of assembly, homodimer. Requires FAD as cofactor. Heme is required as a cofactor. It depends on Mo-molybdopterin as a cofactor.

The enzyme catalyses nitrite + NADP(+) + H2O = nitrate + NADPH + H(+). Nitrate reductase is a key enzyme involved in the first step of nitrate assimilation in plants, fungi and bacteria. The polypeptide is Nitrate reductase [NADPH] (YNR1) (Pichia angusta (Yeast)).